We begin with the raw amino-acid sequence, 399 residues long: Probable sugar efflux transporter (399 aa).

12 consecutive transmembrane segments (helical) span residues 15–35 (VVTL…PVGL), 50–70 (VGMM…PFML), 81–101 (LIGL…AWNF), 103–123 (VLVI…SITS), 136–156 (AQAL…GIPI), 168–188 (MTFL…VKLL), 209–229 (PALV…YTAY), 246–266 (FATV…ILFG), 273–293 (ASGL…LLLP), 301–321 (LMLL…GMQV), 333–353 (VAMS…ALVG), and 364–384 (SVGY…LMIF).

It belongs to the major facilitator superfamily. SotB (TC 2.A.1.2) family.

The protein localises to the cell inner membrane. In terms of biological role, involved in the efflux of sugars. The physiological role may be the reduction of the intracellular concentration of toxic sugars or sugar metabolites. This Klebsiella pneumoniae subsp. pneumoniae (strain ATCC 700721 / MGH 78578) protein is Probable sugar efflux transporter.